Here is a 121-residue protein sequence, read N- to C-terminus: ATP synthase epsilon chain (121 aa).

Belongs to the ATPase epsilon chain family. As to quaternary structure, F-type ATPases have 2 components, CF(1) - the catalytic core - and CF(0) - the membrane proton channel. CF(1) has five subunits: alpha(3), beta(3), gamma(1), delta(1), epsilon(1). CF(0) has three main subunits: a, b and c.

It localises to the cell membrane. In terms of biological role, produces ATP from ADP in the presence of a proton gradient across the membrane. The chain is ATP synthase epsilon chain from Mycolicibacterium vanbaalenii (strain DSM 7251 / JCM 13017 / BCRC 16820 / KCTC 9966 / NRRL B-24157 / PYR-1) (Mycobacterium vanbaalenii).